Reading from the N-terminus, the 449-residue chain is UDP-N-acetylmuramate--L-alanine ligase (449 aa).

110–116 (GTHGKTT) lines the ATP pocket.

It belongs to the MurCDEF family.

Its subcellular location is the cytoplasm. It carries out the reaction UDP-N-acetyl-alpha-D-muramate + L-alanine + ATP = UDP-N-acetyl-alpha-D-muramoyl-L-alanine + ADP + phosphate + H(+). The protein operates within cell wall biogenesis; peptidoglycan biosynthesis. Its function is as follows. Cell wall formation. This Desulfitobacterium hafniense (strain Y51) protein is UDP-N-acetylmuramate--L-alanine ligase.